Reading from the N-terminus, the 303-residue chain is MKQKTTTFKSGFVSIIGRPNVGKSTLLNRVIGQKIAIMSDKPQTTRNKVQGVLTRDDAQLVFMDTPGIHKPKHRLGDFMMKVAKNTLREVDLILYVVEADAKFGPGEQYIIERLQETKTPVFLLINKIDKVSPEELLKVIDLYKDRYPFAEIIPISALEGNNVPTLVEQIVEHMEEGPQYYPADQVTDHPERFIIAELIREKVLHLTKEEIPHSVAVVIEQIKKRDNGKVYVGATVIVERSSQKGIIIGKHGAMLKEVGQLARSDIEALLGSSVYLELWVKVQKDWRNRPSQLKDYGFNENEY.

The Era-type G domain occupies 9–176 (KSGFVSIIGR…VEQIVEHMEE (168 aa)). The interval 17–24 (GRPNVGKS) is G1. 17 to 24 (GRPNVGKS) lines the GTP pocket. Residues 43–47 (QTTRN) are G2. The segment at 64 to 67 (DTPG) is G3. Residues 64-68 (DTPGI) and 126-129 (NKID) each bind GTP. Residues 126 to 129 (NKID) are G4. Residues 155–157 (ISA) are G5. The 86-residue stretch at 199 to 284 (IREKVLHLTK…YLELWVKVQK (86 aa)) folds into the KH type-2 domain.

This sequence belongs to the TRAFAC class TrmE-Era-EngA-EngB-Septin-like GTPase superfamily. Era GTPase family. Monomer.

Its subcellular location is the cytoplasm. The protein resides in the cell membrane. In terms of biological role, an essential GTPase that binds both GDP and GTP, with rapid nucleotide exchange. Plays a role in 16S rRNA processing and 30S ribosomal subunit biogenesis and possibly also in cell cycle regulation and energy metabolism. The sequence is that of GTPase Era from Shouchella clausii (strain KSM-K16) (Alkalihalobacillus clausii).